We begin with the raw amino-acid sequence, 264 residues long: Thiazole synthase (264 aa).

The active-site Schiff-base intermediate with DXP is the K106. 1-deoxy-D-xylulose 5-phosphate contacts are provided by residues G167, 193 to 194 (AG), and 215 to 216 (NS).

The protein belongs to the ThiG family. As to quaternary structure, homotetramer. Forms heterodimers with either ThiH or ThiS.

The protein localises to the cytoplasm. The enzyme catalyses [ThiS sulfur-carrier protein]-C-terminal-Gly-aminoethanethioate + 2-iminoacetate + 1-deoxy-D-xylulose 5-phosphate = [ThiS sulfur-carrier protein]-C-terminal Gly-Gly + 2-[(2R,5Z)-2-carboxy-4-methylthiazol-5(2H)-ylidene]ethyl phosphate + 2 H2O + H(+). It participates in cofactor biosynthesis; thiamine diphosphate biosynthesis. Functionally, catalyzes the rearrangement of 1-deoxy-D-xylulose 5-phosphate (DXP) to produce the thiazole phosphate moiety of thiamine. Sulfur is provided by the thiocarboxylate moiety of the carrier protein ThiS. In vitro, sulfur can be provided by H(2)S. The polypeptide is Thiazole synthase (Prochlorococcus marinus (strain MIT 9301)).